The following is a 370-amino-acid chain: Actin-related protein 2/3 complex subunit 1A (370 aa).

WD repeat units lie at residues 6–45, 50–89, 140–179, 202–241, 244–284, and 322–365; these read FLLE…WVKA, EHNG…WKPT, PIRS…VDEK, GTGG…QVST, TEFL…TFVS, and LHQN…SSIQ.

The protein belongs to the WD repeat ARPC1 family. In terms of assembly, probable component of the Arp2/3 complex in which it may replace ARPC1B. In addition to its role in the cytoplasmic cytoskeleton, the Arp2/3 complex also promotes actin polymerization in the nucleus, thereby regulating gene transcription and repair of damaged DNA.

Its subcellular location is the cytoplasm. The protein resides in the cytoskeleton. The protein localises to the nucleus. Probably functions as a component of the Arp2/3 complex which is involved in regulation of actin polymerization and together with an activating nucleation-promoting factor (NPF) mediates the formation of branched actin networks. This is Actin-related protein 2/3 complex subunit 1A (ARPC1A) from Homo sapiens (Human).